A 59-amino-acid polypeptide reads, in one-letter code: Large ribosomal subunit protein uL30 (59 aa).

The protein belongs to the universal ribosomal protein uL30 family. In terms of assembly, part of the 50S ribosomal subunit.

The chain is Large ribosomal subunit protein uL30 from Mycolicibacterium vanbaalenii (strain DSM 7251 / JCM 13017 / BCRC 16820 / KCTC 9966 / NRRL B-24157 / PYR-1) (Mycobacterium vanbaalenii).